Consider the following 108-residue polypeptide: uncharacterized protein (108 aa).

Residues 20–74 form the HTH cro/C1-type domain; that stretch reads VRQRRTALILDQETLARRIGVSFQQIQKYERGRNRISASRLYDIAKALAVPIDYF. A DNA-binding region (H-T-H motif) is located at residues 31–50; that stretch reads QETLARRIGVSFQQIQKYER.

This is an uncharacterized protein from Rhodospirillum rubrum.